We begin with the raw amino-acid sequence, 1806 residues long: uncharacterized protein (1806 aa).

Disordered regions lie at residues 38–131 and 158–282; these read EASG…SPLF and KAVS…KPRP. A compositionally biased stretch (low complexity) spans 51-70; sequence KSPLRSPARLLPLPRLAPKP. S52, S56, S79, S87, S88, S92, and S128 each carry phosphoserine. Low complexity predominate over residues 82–100; sequence PSLRPSSTGPSPSGGLSEE. A compositionally biased stretch (basic and acidic residues) spans 226 to 236; sequence DTARPLVEPRP. 2 positions are modified to phosphoserine: S244 and S284. 4 disordered regions span residues 299 to 320, 355 to 431, 456 to 604, and 627 to 696; these read RKVADEGSGPTAGDMAGLERPR, KEKM…GGEW, SESP…PEDD, and QSGR…ELRP. The residue at position 366 (S366) is a Phosphoserine. T378 bears the Phosphothreonine mark. S384 is subject to Phosphoserine. The span at 386–400 shows a compositional bias: basic and acidic residues; the sequence is WEEKAKLDPEPEKAA. S404 is subject to Phosphoserine. Over residues 412–422 the composition is skewed to basic and acidic residues; that stretch reads ELAEVKSRVAD. The segment covering 456–470 has biased composition (low complexity); that stretch reads SESPLATPASPSAAP. A phosphoserine mark is found at S458 and S508. Residues 514-523 show a composition bias toward polar residues; sequence LFSSSASSNE. Composition is skewed to basic and acidic residues over residues 524–549 and 564–573; these read VKYEKSAELSGEFPKEPREKQKEGHS and TLRDKSRQTE. T600 bears the Phosphothreonine mark. Composition is skewed to basic and acidic residues over residues 641-652 and 661-674; these read AHARVSEPRPRP and DPPDMTKLKKENSR. S749 carries the post-translational modification Phosphoserine. Disordered regions lie at residues 860-901, 969-989, and 1000-1019; these read QHEG…QART, SPHVGHRRTDYVSPTASALRK, and QEVNPGASRDQTSPAVKQGS. The span at 889 to 900 shows a compositional bias: polar residues; the sequence is RATNGPSDSQAR. 2 positions are modified to phosphoserine: S969 and S981. The span at 969-978 shows a compositional bias: basic and acidic residues; that stretch reads SPHVGHRRTD. Phosphothreonine is present on T1059. A phosphoserine mark is found at S1063 and S1154. A disordered region spans residues 1134 to 1178; that stretch reads RGSEDGPRPQSNWKESANKMSPSGGAPQTTPTLRSRPKDLPVRRK. The segment covering 1142–1166 has biased composition (polar residues); that stretch reads PQSNWKESANKMSPSGGAPQTTPTL. T1163 is modified (phosphothreonine). Positions 1169–1178 are enriched in basic and acidic residues; sequence RPKDLPVRRK. Phosphothreonine occurs at positions 1179 and 1185. Disordered regions lie at residues 1216–1265 and 1291–1493; these read PGEA…PASS and KSSP…VASV. Residue S1224 is modified to Phosphoserine. The residue at position 1226 (T1226) is a Phosphothreonine. Composition is skewed to basic and acidic residues over residues 1244–1254 and 1317–1331; these read EQRRRSLKEMP and DPRKKTGFAEDDRKA. S1366 bears the Phosphoserine mark. Composition is skewed to basic and acidic residues over residues 1393–1410 and 1426–1437; these read DHPRDCGRVPLDIKRAYS and HEARERRREQPK. Phosphoserine is present on S1441. The segment covering 1462 to 1483 has biased composition (basic and acidic residues); that stretch reads DSHKVLPRDLEKEDAPQEKERP. Phosphoserine occurs at positions 1488 and 1506. Disordered regions lie at residues 1512–1627 and 1642–1806; these read QLKQ…KRVD and ALKT…ENQV. A compositionally biased stretch (basic and acidic residues) spans 1522 to 1531; sequence TEPKDTDTLV. Positions 1537–1568 are enriched in polar residues; sequence QYGTWTEQCQSGESLATESPDSSATSTRKQPP. S1555 and S1662 each carry phosphoserine. Residues 1649–1666 show a composition bias toward basic residues; that stretch reads LSKRSRRRAPISHSLRRS. Composition is skewed to basic and acidic residues over residues 1667 to 1677 and 1689 to 1714; these read RFSESESRSPL and DSTEEKSPRKEESDEEETASKAERTP. Phosphoserine occurs at positions 1701, 1757, 1760, and 1786. Positions 1753–1764 are enriched in low complexity; it reads PQPKSPKSPFQP.

This is an uncharacterized protein from Homo sapiens (Human).